A 490-amino-acid chain; its full sequence is MMLSKLDALTLDNSFAALPDTFYTRLAAQPLGRPRLLHANAEAAALIGLDPAELHTQAFLEVASGQRPLPGGDTLAAVYSGHQFGVWAGQLGDGRAHLLGEVRGPGGSWELQLKGAGLTPYSRMGDGRAVLRSSVREYLASEAMHGLGIPTTRALALVVSDDPVMRETRETAAIVTRMSPSFVRFGSFEHWSSRRDGERLRILADYVIDRFYPQCREANGEHGDVLALLREVSQRTAHLMADWQSVGFCHGVMNTDNMSILGLTLDYGPFGFMDAFQLGHVCNHSDSEGRYAWNRQPSVALWNLYRLGGSLHGLVPDADALRGVLAEYETLFTQAFHARMGAKLGLSVWQSDDEALLDDLLRLMHDSRADFTLTFRALAQAVRGQTQPFLDYFIDREAAQAWWSRLAARHACDGRAAAVRAEGMDRVNPLYVLRNHLAEQAIRAAQQGDASEIDRLLGLLRRPYDLQPGAEAYAALPPDWAAGLSVSCSS.

ATP contacts are provided by Gly-92, Gly-94, Arg-95, Lys-114, Asp-126, Gly-127, Arg-177, and Arg-184. Residue Asp-256 is the Proton acceptor of the active site. Residues Asn-257 and Asp-266 each coordinate Mg(2+). Asp-266 is a binding site for ATP.

Belongs to the SELO family. Requires Mg(2+) as cofactor. Mn(2+) is required as a cofactor.

It carries out the reaction L-seryl-[protein] + ATP = 3-O-(5'-adenylyl)-L-seryl-[protein] + diphosphate. The catalysed reaction is L-threonyl-[protein] + ATP = 3-O-(5'-adenylyl)-L-threonyl-[protein] + diphosphate. The enzyme catalyses L-tyrosyl-[protein] + ATP = O-(5'-adenylyl)-L-tyrosyl-[protein] + diphosphate. It catalyses the reaction L-histidyl-[protein] + UTP = N(tele)-(5'-uridylyl)-L-histidyl-[protein] + diphosphate. It carries out the reaction L-seryl-[protein] + UTP = O-(5'-uridylyl)-L-seryl-[protein] + diphosphate. The catalysed reaction is L-tyrosyl-[protein] + UTP = O-(5'-uridylyl)-L-tyrosyl-[protein] + diphosphate. Its function is as follows. Nucleotidyltransferase involved in the post-translational modification of proteins. It can catalyze the addition of adenosine monophosphate (AMP) or uridine monophosphate (UMP) to a protein, resulting in modifications known as AMPylation and UMPylation. The chain is Protein nucleotidyltransferase YdiU from Bordetella avium (strain 197N).